The sequence spans 132 residues: Acetylcholinesterase (132 aa).

Residue Asn37 is glycosylated (N-linked (GlcNAc...) asparagine). Cysteines 45 and 72 form a disulfide.

The protein belongs to the type-B carboxylesterase/lipase family.

The protein localises to the synapse. The protein resides in the secreted. It localises to the cell membrane. The catalysed reaction is acetylcholine + H2O = choline + acetate + H(+). Its function is as follows. Rapidly hydrolyzes choline released into the synapse. In Culex pipiens pipiens (Northern house mosquito), this protein is Acetylcholinesterase (ACE-1).